Consider the following 678-residue polypeptide: Penicillin-binding protein activator LpoA (678 aa).

An N-terminal signal peptide occupies residues 1–26 (MVPSTFSRLKAARCLPVVLAALIFAG). C27 carries N-palmitoyl cysteine lipidation. C27 carries S-diacylglycerol cysteine lipidation. 2 disordered regions span residues 302–340 (DVAE…PVSA) and 496–528 (ALTG…DDQF). Composition is skewed to low complexity over residues 330–340 (QPAAQPVPVSA) and 513–528 (TTNN…DDQF).

The protein belongs to the LpoA family. Interacts with PBP1a.

It is found in the cell outer membrane. Functionally, regulator of peptidoglycan synthesis that is essential for the function of penicillin-binding protein 1A (PBP1a). This is Penicillin-binding protein activator LpoA from Shigella sonnei (strain Ss046).